The sequence spans 429 residues: GTPase Obg (429 aa).

The Obg domain maps to 1 to 158; the sequence is MFVDQVKIYV…RNVQLELKVL (158 aa). The disordered stretch occupies residues 124–145; that stretch reads RGNKRFATPANPAPELSENGEP. The OBG-type G domain maps to 159–329; that stretch reads ADVGLVGFPS…LLLAIADKLE (171 aa). GTP contacts are provided by residues 165 to 172, 190 to 194, 212 to 215, 282 to 285, and 310 to 312; these read GFPSVGKS, FTTIV, DLPG, NKMD, and SAV. Mg(2+) contacts are provided by Ser172 and Thr192. The 79-residue stretch at 351–429 folds into the OCT domain; it reads KYIAEEPDFE…LLDYEFEFMD (79 aa).

The protein belongs to the TRAFAC class OBG-HflX-like GTPase superfamily. OBG GTPase family. As to quaternary structure, monomer. The cofactor is Mg(2+).

Its subcellular location is the cytoplasm. Its function is as follows. An essential GTPase which binds GTP, GDP and possibly (p)ppGpp with moderate affinity, with high nucleotide exchange rates and a fairly low GTP hydrolysis rate. Plays a role in control of the cell cycle, stress response, ribosome biogenesis and in those bacteria that undergo differentiation, in morphogenesis control. The chain is GTPase Obg from Listeria welshimeri serovar 6b (strain ATCC 35897 / DSM 20650 / CCUG 15529 / CIP 8149 / NCTC 11857 / SLCC 5334 / V8).